The following is a 702-amino-acid chain: Phosphatase and actin regulator 4 (702 aa).

3 disordered regions span residues 1–37 (MEDPFEEADQPTTEPGMVLDSVEAGDTTPPTKRKSKF), 72–194 (RKPR…SSGG), and 222–363 (NLSV…PFPA). The RPEL 1 repeat unit spans residues 63 to 88 (EVLERKISMRKPREELVKRGVLLEDP). Residues 72 to 84 (RKPREELVKRGVL) are compositionally biased toward basic and acidic residues. Over residues 106–120 (GHTTPIGNARSSSPV) the composition is skewed to polar residues. Serine 116, serine 118, serine 131, and serine 147 each carry phosphoserine. Residues 147–156 (STGSQPNSEA) are compositionally biased toward polar residues. The span at 163–173 (VPKPPLLPPKR) shows a compositional bias: pro residues. Residues 233–250 (TLPAAPASTNTTATPSLT) are compositionally biased toward low complexity. Residues serine 270 and serine 291 each carry the phosphoserine modification. Over residues 301-318 (PSTSVPTLESAAAITTKT) the composition is skewed to polar residues. Phosphoserine occurs at positions 342 and 344. Residues 342 to 362 (SPSPPLPTHIPPEPPRTPPFP) are compositionally biased toward pro residues. Residue threonine 358 is modified to Phosphothreonine. Serine 427 is subject to Phosphoserine. Residue threonine 432 is modified to Phosphothreonine. Phosphoserine is present on residues serine 443, serine 453, and serine 464. A disordered region spans residues 469–536 (IEMLKVPDDE…EEDEDESYQS (68 aa)). Over residues 484–497 (TCPSTFSEEMTPTS) the composition is skewed to polar residues. A compositionally biased stretch (acidic residues) spans 508-518 (EEEEKESDSDS). Serine 514, serine 516, serine 557, and serine 590 each carry phosphoserine. RPEL repeat units lie at residues 583–608 (NTLIRRLSQRPTPEELEQRNILQPKN) and 621–646 (RRLTRKLSQRPTVAELLARKILRFNE). The disordered stretch occupies residues 592-615 (RPTPEELEQRNILQPKNEADRQAE). Serine 628 is modified (phosphoserine).

It belongs to the phosphatase and actin regulator family. In terms of assembly, binds PPP1CA and actin.

The protein resides in the cytoplasm. Its subcellular location is the cell projection. The protein localises to the lamellipodium. In terms of biological role, regulator of protein phosphatase 1 (PP1) required for neural tube and optic fissure closure, and enteric neural crest cell (ENCCs) migration during development. Acts as an activator of PP1 by interacting with PPP1CA and preventing phosphorylation of PPP1CA at 'Thr-320'. During neural tube closure, localizes to the ventral neural tube and activates PP1, leading to down-regulate cell proliferation within cranial neural tissue and the neural retina. Also acts as a regulator of migration of enteric neural crest cells (ENCCs) by activating PP1, leading to dephosphorylation and subsequent activation of cofilin (COF1 or COF2) and repression of the integrin signaling through the RHO/ROCK pathway. In Homo sapiens (Human), this protein is Phosphatase and actin regulator 4 (PHACTR4).